Here is a 167-residue protein sequence, read N- to C-terminus: Phosphopantetheine adenylyltransferase (167 aa).

Serine 9 contacts substrate. Residues serine 9–phenylalanine 10 and histidine 17 each bind ATP. Residues lysine 41, leucine 73, and lysine 87 each contribute to the substrate site. ATP contacts are provided by residues glycine 88 to arginine 90, glutamate 98, and tyrosine 123 to serine 129.

Belongs to the bacterial CoaD family. As to quaternary structure, homohexamer. The cofactor is Mg(2+).

Its subcellular location is the cytoplasm. It catalyses the reaction (R)-4'-phosphopantetheine + ATP + H(+) = 3'-dephospho-CoA + diphosphate. The protein operates within cofactor biosynthesis; coenzyme A biosynthesis; CoA from (R)-pantothenate: step 4/5. Functionally, reversibly transfers an adenylyl group from ATP to 4'-phosphopantetheine, yielding dephospho-CoA (dPCoA) and pyrophosphate. The chain is Phosphopantetheine adenylyltransferase from Caldicellulosiruptor bescii (strain ATCC BAA-1888 / DSM 6725 / KCTC 15123 / Z-1320) (Anaerocellum thermophilum).